The primary structure comprises 204 residues: Small rubber particle protein (204 aa).

The protein belongs to the REF/SRPP family. As to quaternary structure, auto-assembles in solution into stable nanomultimers of a globular nature. In terms of processing, not glycosylated. Post-translationally, the N-terminus is blocked. Consistent shifts of about 266 Da observed by MS in various forms of the intact protein suggest the addition of stearolyl groups. Highly expressed in the specialized vessel laticifers, but localized only in the laticifer layers in the conducting phloem. Also detected in leaves.

Its subcellular location is the cytoplasm. Functionally, involved in the biosynthesis of rubber, an isoprenoid polymer (cis-1,4-polyisoprene). In Hevea brasiliensis (Para rubber tree), this protein is Small rubber particle protein.